A 302-amino-acid polypeptide reads, in one-letter code: Short-chain dehydrogenase/reductase 3 (302 aa).

Transmembrane regions (helical) follow at residues 9–29, 170–190, 195–215, and 253–273; these read LVMFPLQMIYLVVKAAVGLVL, IVCLNSVLALSAIPGAIDYCT, AFAFMESLTLGLLDCPGVSAT, and AVQLNQALLLLPWTMHALVIL. A substrate-binding site is contributed by Ser-175. The active-site Proton acceptor is Tyr-188.

The protein belongs to the short-chain dehydrogenases/reductases (SDR) family. In terms of tissue distribution, widely expressed with highest levels found in heart, placenta, lung, liver, kidney, pancreas, thyroid, testis, stomach, trachea and spinal cord. Lower levels found in skeletal muscle, intestine and lymph node. No expression detected in brain. In the retina, expressed in cone but not rod outer segments.

The protein resides in the membrane. It catalyses the reaction all-trans-retinol + NADP(+) = all-trans-retinal + NADPH + H(+). Catalyzes the reduction of all-trans-retinal to all-trans-retinol in the presence of NADPH. This Homo sapiens (Human) protein is Short-chain dehydrogenase/reductase 3 (DHRS3).